The primary structure comprises 71 residues: Vitellogenin-B1 (71 aa).

The signal sequence occupies residues M1 to S15. The 48-residue stretch at F24 to K71 folds into the Vitellogenin domain.

In terms of tissue distribution, produced by the liver, secreted into the blood and then sequestered by receptor mediated endocytosis into growing oocytes, where it is generally cleaved, giving rise to the respective yolk components.

Precursor of the major egg-yolk proteins that are sources of nutrients during early development of oviparous organisms. The chain is Vitellogenin-B1 from Xenopus laevis (African clawed frog).